The following is a 362-amino-acid chain: 3-dehydroquinate synthase (362 aa).

NAD(+)-binding positions include 70 to 75 (DGEKYK), 104 to 108 (GVIGD), 128 to 129 (TT), Lys-141, Lys-150, and 168 to 171 (TLNT). 3 residues coordinate Zn(2+): Glu-183, His-246, and His-263.

The protein belongs to the sugar phosphate cyclases superfamily. Dehydroquinate synthase family. NAD(+) serves as cofactor. Co(2+) is required as a cofactor. Requires Zn(2+) as cofactor.

It is found in the cytoplasm. The enzyme catalyses 7-phospho-2-dehydro-3-deoxy-D-arabino-heptonate = 3-dehydroquinate + phosphate. It functions in the pathway metabolic intermediate biosynthesis; chorismate biosynthesis; chorismate from D-erythrose 4-phosphate and phosphoenolpyruvate: step 2/7. Functionally, catalyzes the conversion of 3-deoxy-D-arabino-heptulosonate 7-phosphate (DAHP) to dehydroquinate (DHQ). This chain is 3-dehydroquinate synthase, found in Haemophilus influenzae (strain ATCC 51907 / DSM 11121 / KW20 / Rd).